Here is a 396-residue protein sequence, read N- to C-terminus: Argininosuccinate synthase (396 aa).

ATP is bound at residue 9–17; that stretch reads AYSGGLDTS. Tyr85 contacts L-citrulline. Gly115 provides a ligand contact to ATP. L-aspartate-binding residues include Thr117, Asn121, and Asp122. L-citrulline is bound at residue Asn121. L-citrulline contacts are provided by Arg125, Ser173, Glu258, and Tyr270.

The protein belongs to the argininosuccinate synthase family. Type 1 subfamily. In terms of assembly, homotetramer.

Its subcellular location is the cytoplasm. It carries out the reaction L-citrulline + L-aspartate + ATP = 2-(N(omega)-L-arginino)succinate + AMP + diphosphate + H(+). Its pathway is amino-acid biosynthesis; L-arginine biosynthesis; L-arginine from L-ornithine and carbamoyl phosphate: step 2/3. This Streptococcus mutans serotype c (strain ATCC 700610 / UA159) protein is Argininosuccinate synthase.